A 135-amino-acid polypeptide reads, in one-letter code: Histone H3.3C (135 aa).

The interval 1–41 is disordered; it reads MARTKQTARKSTGGKAPRKQLATKAARKSTPSTCGVKPHRY. Position 3 is an asymmetric dimethylarginine; by PRMT6; alternate (arginine 3). Arginine 3 bears the Citrulline; alternate mark. Position 4 is a phosphothreonine; by HASPIN (threonine 4). Lysine 5 carries the allysine; alternate modification. Residue lysine 5 is modified to N6,N6,N6-trimethyllysine; alternate. N6,N6-dimethyllysine; alternate is present on lysine 5. N6-(2-hydroxyisobutyryl)lysine; alternate is present on lysine 5. Position 5 is an N6-(beta-hydroxybutyryl)lysine; alternate (lysine 5). An N6-acetyllysine; alternate modification is found at lysine 5. Lysine 5 is subject to N6-methyllysine; alternate. Position 6 is a 5-glutamyl dopamine; alternate (glutamine 6). Position 6 is a 5-glutamyl serotonin; alternate (glutamine 6). At threonine 7 the chain carries Phosphothreonine; by PKC. A Citrulline; alternate modification is found at arginine 9. At arginine 9 the chain carries Symmetric dimethylarginine; by PRMT5; alternate. N6,N6,N6-trimethyllysine; alternate is present on lysine 10. At lysine 10 the chain carries N6,N6-dimethyllysine; alternate. The residue at position 10 (lysine 10) is an N6-(2-hydroxyisobutyryl)lysine; alternate. Position 10 is an N6-(beta-hydroxybutyryl)lysine; alternate (lysine 10). The residue at position 10 (lysine 10) is an N6-acetyllysine; alternate. Lysine 10 bears the N6-methyllysine; alternate mark. N6-lactoyllysine; alternate is present on lysine 10. Residue serine 11 is modified to ADP-ribosylserine; alternate. Serine 11 carries the phosphoserine; alternate; by AURKB, AURKC, RPS6KA3, RPS6KA4 and RPS6KA5 modification. Residue threonine 12 is modified to Phosphothreonine; by PKC. Lysine 15 carries the N6-(2-hydroxyisobutyryl)lysine; alternate modification. Position 15 is an N6-(beta-hydroxybutyryl)lysine; alternate (lysine 15). Residue lysine 15 is modified to N6-acetyllysine; alternate. Lysine 15 bears the N6-lactoyllysine; alternate mark. The residue at position 15 (lysine 15) is an N6-glutaryllysine; alternate. At lysine 15 the chain carries N6-succinyllysine; alternate. Arginine 18 is modified (citrulline; alternate). Arginine 18 carries the post-translational modification Asymmetric dimethylarginine; by CARM1; alternate. N6-(2-hydroxyisobutyryl)lysine; alternate occurs at positions 19 and 24. 2 positions are modified to N6-(beta-hydroxybutyryl)lysine; alternate: lysine 19 and lysine 24. An N6-acetyllysine; alternate mark is found at lysine 19 and lysine 24. N6-methyllysine; alternate occurs at positions 19 and 24. N6-lactoyllysine; alternate is present on residues lysine 19 and lysine 24. Lysine 19 and lysine 24 each carry N6-glutaryllysine; alternate. N6-butyryllysine; alternate occurs at positions 19 and 24. Residue arginine 27 is modified to Citrulline. Residue lysine 28 is modified to N6,N6,N6-trimethyllysine; alternate. An N6,N6-dimethyllysine; alternate modification is found at lysine 28. Lysine 28 carries the post-translational modification N6-(2-hydroxyisobutyryl)lysine; alternate. Lysine 28 bears the N6-acetyllysine; alternate mark. An N6-methyllysine; alternate modification is found at lysine 28. Lysine 28 is modified (N6-lactoyllysine; alternate). Lysine 28 carries the post-translational modification N6-glutaryllysine; alternate. Position 29 is an ADP-ribosylserine; alternate (serine 29). Phosphoserine; alternate; by AURKB, AURKC and RPS6KA5 is present on serine 29. Serine 32 bears the Phosphoserine mark. Lysine 37 is subject to N6-methyllysine. Tyrosine 41 carries the phosphotyrosine modification. Lysine 56 is modified (N6,N6,N6-trimethyllysine; alternate). Lysine 56 is subject to N6-(2-hydroxyisobutyryl)lysine; alternate. Lysine 56 bears the N6-(beta-hydroxybutyryl)lysine; alternate mark. An N6-acetyllysine; alternate modification is found at lysine 56. N6-lactoyllysine; alternate is present on lysine 56. The residue at position 56 (lysine 56) is an N6-glutaryllysine; alternate. Lysine 56 carries the N6-succinyllysine; alternate modification. The residue at position 56 (lysine 56) is an N6-methyllysine; by EHMT2; alternate. Serine 57 is subject to Phosphoserine. N6-(2-hydroxyisobutyryl)lysine; alternate is present on lysine 64. Position 64 is an N6-methyllysine; alternate (lysine 64). The residue at position 80 (threonine 80) is a Phosphothreonine. Phosphoserine is present on serine 86. Threonine 107 carries the phosphothreonine modification. Lysine 115 and lysine 122 each carry N6-glutaryllysine; alternate. Lysine 115 carries the N6-acetyllysine modification. Lysine 122 carries the post-translational modification N6-(2-hydroxyisobutyryl)lysine; alternate. The residue at position 122 (lysine 122) is an N6-acetyllysine; alternate. Lysine 122 carries the N6-methyllysine; alternate modification. Lysine 122 is modified (N6-succinyllysine; alternate).

This sequence belongs to the histone H3 family. The nucleosome is a histone octamer containing two molecules each of H2A, H2B, H3 and H4 assembled in one H3-H4 heterotetramer and two H2A-H2B heterodimers. The octamer wraps approximately 147 bp of DNA. Acetylation is generally linked to gene activation. Acetylation on Lys-10 (H3K9ac) impairs methylation at Arg-9 (H3R8me2s). Acetylation on Lys-19 (H3K18ac) and Lys-24 (H3K24ac) favors methylation at Arg-18 (H3R17me). Acetylation at Lys-122 (H3K122ac) by EP300/p300 plays a central role in chromatin structure: localizes at the surface of the histone octamer and stimulates transcription, possibly by promoting nucleosome instability. Post-translationally, citrullination at Arg-9 (H3R8ci) and/or Arg-18 (H3R17ci) by PADI4 impairs methylation and represses transcription. In terms of processing, asymmetric dimethylation at Arg-18 (H3R17me2a) by CARM1 is linked to gene activation. Symmetric dimethylation at Arg-9 (H3R8me2s) by PRMT5 is linked to gene repression. Asymmetric dimethylation at Arg-3 (H3R2me2a) by PRMT6 is linked to gene repression and is mutually exclusive with H3 Lys-5 methylation (H3K4me2 and H3K4me3). H3R2me2a is present at the 3' of genes regardless of their transcription state and is enriched on inactive promoters, while it is absent on active promoters. Methylation at Lys-5 (H3K4me) is linked to gene activation. Methylation at Lys-5 (H3K4me) facilitates subsequent acetylation of H3 and H4. Methylation at Lys-10 (H3K9me) and Lys-28 (H3K27me) are linked to gene repression. Methylation at Lys-10 (H3K9me) is a specific target for HP1 proteins (CBX1, CBX3 and CBX5) and prevents subsequent phosphorylation at Ser-11 (H3S10ph) and acetylation of H3 and H4. Methylation at Lys-5 (H3K4me) requires preliminary monoubiquitination of H2B at 'Lys-120'. Methylation at Lys-10 (H3K9me) and Lys-28 (H3K27me) are enriched in inactive X chromosome chromatin. Monomethylation at Lys-56 (H3K56me1) by EHMT2/G9A in G1 phase promotes interaction with PCNA and is required for DNA replication. Post-translationally, phosphorylated at Thr-4 (H3T3ph) by HASPIN during prophase and dephosphorylated during anaphase. Phosphorylation at Ser-11 (H3S10ph) by AURKB is crucial for chromosome condensation and cell-cycle progression during mitosis and meiosis. In addition phosphorylation at Ser-11 (H3S10ph) by RPS6KA4 and RPS6KA5 is important during interphase because it enables the transcription of genes following external stimulation, like mitogens, stress, growth factors or UV irradiation and result in the activation of genes, such as c-fos and c-jun. Phosphorylation at Ser-11 (H3S10ph), which is linked to gene activation, prevents methylation at Lys-10 (H3K9me) but facilitates acetylation of H3 and H4. Phosphorylation at Ser-11 (H3S10ph) by AURKB mediates the dissociation of HP1 proteins (CBX1, CBX3 and CBX5) from heterochromatin. Phosphorylation at Ser-11 (H3S10ph) is also an essential regulatory mechanism for neoplastic cell transformation. Phosphorylated at Ser-29 (H3S28ph) by MAP3K20 isoform 1, RPS6KA5 or AURKB during mitosis or upon ultraviolet B irradiation. Phosphorylation at Thr-7 (H3T6ph) by PRKCB is a specific tag for epigenetic transcriptional activation that prevents demethylation of Lys-5 (H3K4me) by LSD1/KDM1A. At centromeres, specifically phosphorylated at Thr-12 (H3T11ph) from prophase to early anaphase, by DAPK3 and PKN1. Phosphorylation at Thr-12 (H3T11ph) by PKN1 or isoform M2 of PKM (PKM2) is a specific tag for epigenetic transcriptional activation that promotes demethylation of Lys-10 (H3K9me) by KDM4C/JMJD2C. Phosphorylation at Tyr-41 (H3Y41ph) by JAK2 promotes exclusion of CBX5 (HP1 alpha) from chromatin. In terms of processing, lysine deamination at Lys-5 (H3K4all) to form allysine is mediated by LOXL2. Allysine formation by LOXL2 only takes place on H3K4me3 and results in gene repression. Butyrylation of histones marks active promoters and competes with histone acetylation. It is present during late spermatogenesis. Post-translationally, succinylated. Desuccinylation at Lys-122 (H3K122succ) by SIRT7 in response to DNA damage promotes chromatin condensation and double-strand breaks (DSBs) repair. In terms of processing, serine ADP-ribosylation constitutes the primary form of ADP-ribosylation of proteins in response to DNA damage. Serine ADP-ribosylation at Ser-11 (H3S10ADPr) is mutually exclusive with phosphorylation at Ser-11 (H3S10ph) and impairs acetylation at Lys-10 (H3K9ac). As to expression, specifically expressed in the seminiferous tubules of testis.

The protein localises to the nucleus. Its subcellular location is the chromosome. Functionally, core component of nucleosome. Nucleosomes wrap and compact DNA into chromatin, limiting DNA accessibility to the cellular machineries which require DNA as a template. Histones thereby play a central role in transcription regulation, DNA repair, DNA replication and chromosomal stability. DNA accessibility is regulated via a complex set of post-translational modifications of histones, also called histone code, and nucleosome remodeling. Hominid-specific H3.5/H3F3C preferentially colocalizes with euchromatin, and it is associated with actively transcribed genes. The sequence is that of Histone H3.3C from Homo sapiens (Human).